A 319-amino-acid polypeptide reads, in one-letter code: Curved DNA-binding protein (319 aa).

Positions 5–69 (DYYKILGVEP…QKRAEFDEIR (65 aa)) constitute a J domain.

It is found in the cytoplasm. The protein resides in the nucleoid. DNA-binding protein that preferentially recognizes a curved DNA sequence. It is probably a functional analog of DnaJ; displays overlapping activities with DnaJ, but functions under different conditions, probably acting as a molecular chaperone in an adaptive response to environmental stresses other than heat shock. Lacks autonomous chaperone activity; binds native substrates and targets them for recognition by DnaK. Its activity is inhibited by the binding of CbpM. This Pseudomonas putida (strain ATCC 700007 / DSM 6899 / JCM 31910 / BCRC 17059 / LMG 24140 / F1) protein is Curved DNA-binding protein.